The sequence spans 415 residues: Serine hydroxymethyltransferase (415 aa).

(6S)-5,6,7,8-tetrahydrofolate contacts are provided by residues L115 and 119–121; that span reads GHL. The residue at position 224 (K224) is an N6-(pyridoxal phosphate)lysine. Residue 348–350 coordinates (6S)-5,6,7,8-tetrahydrofolate; it reads SPF.

Belongs to the SHMT family. Homodimer. Requires pyridoxal 5'-phosphate as cofactor.

The protein resides in the cytoplasm. The catalysed reaction is (6R)-5,10-methylene-5,6,7,8-tetrahydrofolate + glycine + H2O = (6S)-5,6,7,8-tetrahydrofolate + L-serine. It participates in one-carbon metabolism; tetrahydrofolate interconversion. It functions in the pathway amino-acid biosynthesis; glycine biosynthesis; glycine from L-serine: step 1/1. Functionally, catalyzes the reversible interconversion of serine and glycine with tetrahydrofolate (THF) serving as the one-carbon carrier. This reaction serves as the major source of one-carbon groups required for the biosynthesis of purines, thymidylate, methionine, and other important biomolecules. Also exhibits THF-independent aldolase activity toward beta-hydroxyamino acids, producing glycine and aldehydes, via a retro-aldol mechanism. The polypeptide is Serine hydroxymethyltransferase (Latilactobacillus sakei subsp. sakei (strain 23K) (Lactobacillus sakei subsp. sakei)).